The primary structure comprises 314 residues: Ribosomal protein L11 methyltransferase (314 aa).

S-adenosyl-L-methionine contacts are provided by threonine 164, glycine 185, aspartate 207, and asparagine 249.

It belongs to the methyltransferase superfamily. PrmA family.

Its subcellular location is the cytoplasm. It carries out the reaction L-lysyl-[protein] + 3 S-adenosyl-L-methionine = N(6),N(6),N(6)-trimethyl-L-lysyl-[protein] + 3 S-adenosyl-L-homocysteine + 3 H(+). Methylates ribosomal protein L11. The chain is Ribosomal protein L11 methyltransferase from Clostridium beijerinckii (strain ATCC 51743 / NCIMB 8052) (Clostridium acetobutylicum).